A 279-amino-acid chain; its full sequence is MKVYLCAISNISSGVCAEDCKFCTQSTKYRADIPRYKYKSIETIVEEAKKAKAAKAIGFCLVTAGKGIDDKILDFVTQAARAVKKEVPDISLIGCNGTAEVWQLKELKHAGIDNYNHNLETAKSFYEQICSTHSWEERYQTCLNAKEAGLNLCTGGIFGLGESKEQREEMMDQIASLEPMSVPINFYHPNEALPLPQTTIDPSDALSIIQDMRKRVPNAMIMVAGGRELVFGEQWPKILDAGANAIVIGDYLTTKGERPDKDIQTLQKLGVEIATSCHE.

Residues 1-227 (MKVYLCAISN…NAMIMVAGGR (227 aa)) enclose the Radical SAM core domain. Positions 16, 20, and 23 each coordinate [4Fe-4S] cluster. Residues Cys60, Cys95, and Cys153 each coordinate [2Fe-2S] cluster.

The protein belongs to the radical SAM superfamily. Biotin synthase family. In terms of assembly, homodimer. It depends on [4Fe-4S] cluster as a cofactor. [2Fe-2S] cluster serves as cofactor.

The catalysed reaction is (4R,5S)-dethiobiotin + (sulfur carrier)-SH + 2 reduced [2Fe-2S]-[ferredoxin] + 2 S-adenosyl-L-methionine = (sulfur carrier)-H + biotin + 2 5'-deoxyadenosine + 2 L-methionine + 2 oxidized [2Fe-2S]-[ferredoxin]. Its pathway is cofactor biosynthesis; biotin biosynthesis; biotin from 7,8-diaminononanoate: step 2/2. Its function is as follows. Catalyzes the conversion of dethiobiotin (DTB) to biotin by the insertion of a sulfur atom into dethiobiotin via a radical-based mechanism. This chain is Biotin synthase, found in Nitratiruptor sp. (strain SB155-2).